The following is a 227-amino-acid chain: Ribosomal RNA large subunit methyltransferase E (227 aa).

Residues glycine 78, tryptophan 80, aspartate 103, aspartate 119, and aspartate 143 each coordinate S-adenosyl-L-methionine. The Proton acceptor role is filled by lysine 183.

The protein belongs to the class I-like SAM-binding methyltransferase superfamily. RNA methyltransferase RlmE family.

It is found in the cytoplasm. The catalysed reaction is uridine(2552) in 23S rRNA + S-adenosyl-L-methionine = 2'-O-methyluridine(2552) in 23S rRNA + S-adenosyl-L-homocysteine + H(+). Specifically methylates the uridine in position 2552 of 23S rRNA at the 2'-O position of the ribose in the fully assembled 50S ribosomal subunit. In Rickettsia rickettsii (strain Iowa), this protein is Ribosomal RNA large subunit methyltransferase E.